The chain runs to 313 residues: MSKMTPQEMAAKIGSGLLSFPVTPFKADYSFDEATYRANMDWLCGYEVAGLFAAGGTGEFFSLTPAEVPEVVRVAVDETRGRVPVLAGTGYGTAIAREIAIGAEKAGADGLLLLPPYLTHAEQDGLAAHVEAVCKSVKIGVIVYNRDNAILQPDTLARLCERCPNLVGYKDGIGDIELMTRVYSKMGDRLTYIGGLPTAETFALPYLDMGVTTYSSAVFNFVPEFATNFYAAVRKRDHATIHAGLKDFILPLIAIRNRKKGYAVSIIKAGMKVIGRDSGPVRLPLTDLTETEMAELTALVKALPAAAVSQAAE.

This sequence belongs to the DapA family.

The enzyme catalyses 5-dehydro-4-deoxy-D-glucarate + H(+) = 2,5-dioxopentanoate + CO2 + H2O. It participates in carbohydrate acid metabolism; D-glucarate degradation; 2,5-dioxopentanoate from D-glucarate: step 2/2. In Bradyrhizobium sp. (strain BTAi1 / ATCC BAA-1182), this protein is Probable 5-dehydro-4-deoxyglucarate dehydratase.